The sequence spans 362 residues: Methylthioribose-1-phosphate isomerase (362 aa).

The active-site Proton donor is the Asp252.

The protein belongs to the eIF-2B alpha/beta/delta subunits family. MtnA subfamily.

It is found in the cytoplasm. The protein localises to the nucleus. The catalysed reaction is 5-(methylsulfanyl)-alpha-D-ribose 1-phosphate = 5-(methylsulfanyl)-D-ribulose 1-phosphate. It participates in amino-acid biosynthesis; L-methionine biosynthesis via salvage pathway; L-methionine from S-methyl-5-thio-alpha-D-ribose 1-phosphate: step 1/6. Its function is as follows. Catalyzes the interconversion of methylthioribose-1-phosphate (MTR-1-P) into methylthioribulose-1-phosphate (MTRu-1-P). The protein is Methylthioribose-1-phosphate isomerase of Drosophila persimilis (Fruit fly).